The chain runs to 198 residues: Recombination protein RecR (198 aa).

The C4-type zinc finger occupies 59-74; the sequence is CSLCCNYTDHDPCPIC. Residues 82-175 enclose the Toprim domain; the sequence is TLLCIVEQPR…KVTRIAHGLP (94 aa).

The protein belongs to the RecR family.

In terms of biological role, may play a role in DNA repair. It seems to be involved in an RecBC-independent recombinational process of DNA repair. It may act with RecF and RecO. The chain is Recombination protein RecR from Desulfitobacterium hafniense (strain Y51).